The sequence spans 96 residues: uncharacterized protein (96 aa).

Residues 1-21 (MSDFEIIVGISSLLQVIILNI) form a helical membrane-spanning segment.

It localises to the membrane. This is an uncharacterized protein from Saccharomyces cerevisiae (strain ATCC 204508 / S288c) (Baker's yeast).